The chain runs to 278 residues: Probable endonuclease 4 (278 aa).

His-69, His-109, Glu-145, Asp-179, His-182, His-214, Asp-227, His-229, and Glu-259 together coordinate Zn(2+).

It belongs to the AP endonuclease 2 family. Requires Zn(2+) as cofactor.

The enzyme catalyses Endonucleolytic cleavage to 5'-phosphooligonucleotide end-products.. Functionally, endonuclease IV plays a role in DNA repair. It cleaves phosphodiester bonds at apurinic or apyrimidinic (AP) sites, generating a 3'-hydroxyl group and a 5'-terminal sugar phosphate. This chain is Probable endonuclease 4, found in Bacteroides fragilis (strain ATCC 25285 / DSM 2151 / CCUG 4856 / JCM 11019 / LMG 10263 / NCTC 9343 / Onslow / VPI 2553 / EN-2).